A 424-amino-acid chain; its full sequence is Tyrosine--tRNA ligase (424 aa).

Tyr37 is a binding site for L-tyrosine. The 'HIGH' region motif lies at Pro42–His51. Position 144 is an N6-acetyllysine (Lys144). Positions 175 and 179 each coordinate L-tyrosine. The 'KMSKS' region signature appears at Lys235–Thr239. Lys238 is an ATP binding site. In terms of domain architecture, S4 RNA-binding spans Ala357–Gly414.

The protein belongs to the class-I aminoacyl-tRNA synthetase family. TyrS type 1 subfamily. As to quaternary structure, homodimer.

It is found in the cytoplasm. The enzyme catalyses tRNA(Tyr) + L-tyrosine + ATP = L-tyrosyl-tRNA(Tyr) + AMP + diphosphate + H(+). Its function is as follows. Catalyzes the attachment of tyrosine to tRNA(Tyr) in a two-step reaction: tyrosine is first activated by ATP to form Tyr-AMP and then transferred to the acceptor end of tRNA(Tyr). The sequence is that of Tyrosine--tRNA ligase from Shigella flexneri serotype 5b (strain 8401).